Consider the following 537-residue polypeptide: CTP synthase (537 aa).

An amidoligase domain region spans residues 1–265; that stretch reads MVHFIFVTGG…DNKVLKFFNI (265 aa). S13 serves as a coordination point for CTP. S13 lines the UTP pocket. Residues 14–19 and D71 contribute to the ATP site; that span reads SLGKGL. Mg(2+) contacts are provided by D71 and E139. Residues 146-148 and K222 each bind CTP; that span reads DIE. K222 serves as a coordination point for UTP. One can recognise a Glutamine amidotransferase type-1 domain in the interval 290–536; it reads RIAIIAKYHK…IKAAIEYNKC (247 aa). G352 contributes to the L-glutamine binding site. C379 functions as the Nucleophile; for glutamine hydrolysis in the catalytic mechanism. L-glutamine contacts are provided by residues 380 to 383, E403, and R464; that span reads FGMQ. Active-site residues include H509 and E511.

This sequence belongs to the CTP synthase family. In terms of assembly, homotetramer.

It carries out the reaction UTP + L-glutamine + ATP + H2O = CTP + L-glutamate + ADP + phosphate + 2 H(+). The catalysed reaction is L-glutamine + H2O = L-glutamate + NH4(+). It catalyses the reaction UTP + NH4(+) + ATP = CTP + ADP + phosphate + 2 H(+). It functions in the pathway pyrimidine metabolism; CTP biosynthesis via de novo pathway; CTP from UDP: step 2/2. Its activity is regulated as follows. Allosterically activated by GTP, when glutamine is the substrate; GTP has no effect on the reaction when ammonia is the substrate. The allosteric effector GTP functions by stabilizing the protein conformation that binds the tetrahedral intermediate(s) formed during glutamine hydrolysis. Inhibited by the product CTP, via allosteric rather than competitive inhibition. Catalyzes the ATP-dependent amination of UTP to CTP with either L-glutamine or ammonia as the source of nitrogen. Regulates intracellular CTP levels through interactions with the four ribonucleotide triphosphates. The protein is CTP synthase of Rickettsia peacockii (strain Rustic).